The following is a 143-amino-acid chain: Transcriptional regulator MraZ (143 aa).

2 consecutive SpoVT-AbrB domains span residues 5-47 (EYKH…SLKE) and 76-119 (ACEC…SEEN).

Belongs to the MraZ family. Forms oligomers.

The protein localises to the cytoplasm. It is found in the nucleoid. The polypeptide is Transcriptional regulator MraZ (Caldicellulosiruptor saccharolyticus (strain ATCC 43494 / DSM 8903 / Tp8T 6331)).